We begin with the raw amino-acid sequence, 449 residues long: Alginate biosynthesis transcriptional regulatory protein AlgB (449 aa).

The region spanning arginine 10 to leucine 124 is the Response regulatory domain. At aspartate 59 the chain carries 4-aspartylphosphate. In terms of domain architecture, Sigma-54 factor interaction spans leucine 147–isoleucine 376. ATP is bound by residues glycine 175–glycine 182 and alanine 238–glutamate 247. The segment at residues leucine 426–lysine 445 is a DNA-binding region (H-T-H motif).

In terms of processing, phosphorylated by KinB.

It participates in glycan biosynthesis; alginate biosynthesis [regulation]. Member of the two-component regulatory system AlgB/KinB involved in regulation of alginate biosynthesis genes. Positive regulator of the alginate biosynthetic gene AlgD. This is Alginate biosynthesis transcriptional regulatory protein AlgB (algB) from Pseudomonas aeruginosa (strain ATCC 15692 / DSM 22644 / CIP 104116 / JCM 14847 / LMG 12228 / 1C / PRS 101 / PAO1).